The primary structure comprises 154 residues: uncharacterized protein (154 aa).

Positions 4, 7, 16, 19, 24, 28, 32, and 36 each coordinate Zn(2+). The segment at 4 to 36 (CSICNESEIKYKCPKCSFPYCSLPCWKIHQSQC) adopts an HIT-type zinc-finger fold.

This is an uncharacterized protein from Schizosaccharomyces pombe (strain 972 / ATCC 24843) (Fission yeast).